The primary structure comprises 896 residues: FHIP family protein C05D11.8 (896 aa).

The disordered stretch occupies residues 823–865 (STASSPRTSDDHDPTLFYGRSTMAPPGRKPLLREPSRQETLDD). Basic and acidic residues predominate over residues 853–865 (LLREPSRQETLDD).

It belongs to the FHIP family.

In Caenorhabditis elegans, this protein is FHIP family protein C05D11.8.